A 420-amino-acid polypeptide reads, in one-letter code: Histidine--tRNA ligase (420 aa).

Belongs to the class-II aminoacyl-tRNA synthetase family. As to quaternary structure, homodimer.

It is found in the cytoplasm. The enzyme catalyses tRNA(His) + L-histidine + ATP = L-histidyl-tRNA(His) + AMP + diphosphate + H(+). This Staphylococcus aureus (strain Mu3 / ATCC 700698) protein is Histidine--tRNA ligase.